Reading from the N-terminus, the 353-residue chain is Thrombopoietin (353 aa).

The first 21 residues, 1-21 (MELTELLLVVMLLLTARLTLS), serve as a signal peptide directing secretion. O-linked (GalNAc...) serine glycosylation is present at Ser22. Disulfide bonds link Cys28–Cys172 and Cys50–Cys106. Thr58, Thr131, Thr179, and Thr180 each carry an O-linked (GalNAc...) threonine glycan. A glycan (O-linked (GalNAc...) serine) is linked at Ser184. Residues Asn197 and Asn206 are each glycosylated (N-linked (GlcNAc...) (complex) asparagine). A glycan (O-linked (GalNAc...) threonine) is linked at Thr213. 2 N-linked (GlcNAc...) (complex) asparagine glycosylation sites follow: Asn234 and Asn255. The segment at 257–353 (TRGLFPGPSR…THSQNLSQEG (97 aa)) is disordered. Ser265 carries an O-linked (GalNAc...) serine glycan. Residues 275–304 (SSGTSDTGSLPPNLQPGYSPSPTHPPTGQY) are compositionally biased toward polar residues. Residues 324 to 335 (LPDPSAPTPTPT) are compositionally biased toward pro residues. N-linked (GlcNAc...) asparagine glycans are attached at residues Asn340 and Asn348. Polar residues predominate over residues 343-353 (YTHSQNLSQEG).

Belongs to the EPO/TPO family. As to quaternary structure, interacts with MPL/TPOR.

It localises to the secreted. Its function is as follows. Lineage-specific cytokine affecting the proliferation and maturation of megakaryocytes from their committed progenitor cells. It acts at a late stage of megakaryocyte development. It may be the major physiological regulator of circulating platelets. This is Thrombopoietin (THPO) from Homo sapiens (Human).